Consider the following 108-residue polypeptide: Nucleoid-associated protein GK0018 (108 aa).

The tract at residues 1-32 (MMRGGMGNMQKMLKQMQKMQKEMQKAQEELAE) is disordered. Positions 9–18 (MQKMLKQMQK) are enriched in low complexity. Positions 19–32 (MQKEMQKAQEELAE) are enriched in basic and acidic residues.

The protein belongs to the YbaB/EbfC family. As to quaternary structure, homodimer.

Its subcellular location is the cytoplasm. It is found in the nucleoid. Its function is as follows. Binds to DNA and alters its conformation. May be involved in regulation of gene expression, nucleoid organization and DNA protection. This Geobacillus kaustophilus (strain HTA426) protein is Nucleoid-associated protein GK0018.